Consider the following 198-residue polypeptide: Thymidine kinase (198 aa).

Residues 9–16 (GTMNSGKS) and 85–88 (DEAQ) each bind ATP. The Proton acceptor role is filled by E86. Positions 143, 146, 180, and 183 each coordinate Zn(2+).

This sequence belongs to the thymidine kinase family. As to quaternary structure, homotetramer.

The protein localises to the cytoplasm. It catalyses the reaction thymidine + ATP = dTMP + ADP + H(+). This chain is Thymidine kinase, found in Streptococcus thermophilus (strain ATCC BAA-250 / LMG 18311).